The chain runs to 64 residues: Probable cytochrome c oxidase subunit 5C-3 (64 aa).

A helical transmembrane segment spans residues 15–34 (SVVKELVIGLTLGLAAGGLW).

Belongs to the cytochrome c oxidase subunit 5C family.

The protein resides in the mitochondrion inner membrane. Its function is as follows. This protein is one of the nuclear-coded polypeptide chains of cytochrome c oxidase, the terminal oxidase in mitochondrial electron transport. The polypeptide is Probable cytochrome c oxidase subunit 5C-3 (Arabidopsis thaliana (Mouse-ear cress)).